We begin with the raw amino-acid sequence, 239 residues long: Orotidine 5'-phosphate decarboxylase (239 aa).

Substrate is bound by residues D11, K33, 60-69 (DLKLHDIPTT), T123, R185, Q194, G214, and R215. K62 acts as the Proton donor in catalysis.

This sequence belongs to the OMP decarboxylase family. Type 1 subfamily. Homodimer.

It catalyses the reaction orotidine 5'-phosphate + H(+) = UMP + CO2. It functions in the pathway pyrimidine metabolism; UMP biosynthesis via de novo pathway; UMP from orotate: step 2/2. Functionally, catalyzes the decarboxylation of orotidine 5'-monophosphate (OMP) to uridine 5'-monophosphate (UMP). This Bacillus subtilis (strain 168) protein is Orotidine 5'-phosphate decarboxylase (pyrF).